The following is a 365-amino-acid chain: Alanine racemase (365 aa).

K32 serves as the catalytic Proton acceptor; specific for D-alanine. An N6-(pyridoxal phosphate)lysine modification is found at K32. R128 contributes to the substrate binding site. Residue Y257 is the Proton acceptor; specific for L-alanine of the active site. A substrate-binding site is contributed by M305.

Belongs to the alanine racemase family. Pyridoxal 5'-phosphate serves as cofactor.

It carries out the reaction L-alanine = D-alanine. The protein operates within amino-acid biosynthesis; D-alanine biosynthesis; D-alanine from L-alanine: step 1/1. Catalyzes the interconversion of L-alanine and D-alanine. May also act on other amino acids. The chain is Alanine racemase (alr) from Francisella tularensis subsp. tularensis (strain SCHU S4 / Schu 4).